The primary structure comprises 408 residues: S-adenosylmethionine:tRNA ribosyltransferase-isomerase (408 aa).

Belongs to the QueA family. In terms of assembly, monomer.

It is found in the cytoplasm. It catalyses the reaction 7-aminomethyl-7-carbaguanosine(34) in tRNA + S-adenosyl-L-methionine = epoxyqueuosine(34) in tRNA + adenine + L-methionine + 2 H(+). It functions in the pathway tRNA modification; tRNA-queuosine biosynthesis. Transfers and isomerizes the ribose moiety from AdoMet to the 7-aminomethyl group of 7-deazaguanine (preQ1-tRNA) to give epoxyqueuosine (oQ-tRNA). The sequence is that of S-adenosylmethionine:tRNA ribosyltransferase-isomerase from Trichormus variabilis (strain ATCC 29413 / PCC 7937) (Anabaena variabilis).